Consider the following 453-residue polypeptide: Glutamyl-tRNA(Gln) amidotransferase subunit A (453 aa).

Residues Lys-56 and Ser-131 each act as charge relay system in the active site. Residue Ser-155 is the Acyl-ester intermediate of the active site.

It belongs to the amidase family. GatA subfamily. In terms of assembly, heterotrimer of A, B and C subunits.

The catalysed reaction is L-glutamyl-tRNA(Gln) + L-glutamine + ATP + H2O = L-glutaminyl-tRNA(Gln) + L-glutamate + ADP + phosphate + H(+). Its function is as follows. Allows the formation of correctly charged Gln-tRNA(Gln) through the transamidation of misacylated Glu-tRNA(Gln) in organisms which lack glutaminyl-tRNA synthetase. The reaction takes place in the presence of glutamine and ATP through an activated gamma-phospho-Glu-tRNA(Gln). The protein is Glutamyl-tRNA(Gln) amidotransferase subunit A of Campylobacter jejuni (strain RM1221).